The chain runs to 231 residues: Histone H1 (231 aa).

A compositionally biased stretch (low complexity) spans 1–17 (MSDPAIEVAPVPVASPA). 2 disordered regions span residues 1-44 (MSDP…PVSD) and 124-231 (TKKV…AKKA). The H15 domain occupies 38–112 (THPPVSDMIV…GASGSFKLPA (75 aa)). Basic residues-rich tracts occupy residues 145–171 (KVKK…KTTK), 178–213 (PTKK…KAKK), and 221–231 (KAAKKPSAKKA).

The protein belongs to the histone H1/H5 family.

It is found in the nucleus. Its subcellular location is the chromosome. Its function is as follows. Histones H1 are necessary for the condensation of nucleosome chains into higher-order structures. This Chironomus thummi thummi (Midge) protein is Histone H1.